Reading from the N-terminus, the 711-residue chain is Zinc finger CCCH domain-containing protein 43 (711 aa).

Positions 1–49 (MPQDDDWFWGRPTPVVVGDGETTSKPKPPVAGKTKKVEEQHPRRPGEPD) are disordered. A compositionally biased stretch (basic and acidic residues) spans 35–47 (KKVEEQHPRRPGE). 3 consecutive C3H1-type zinc fingers follow at residues 44-72 (RPGEPDCSYYVKFGSCKFGISCVYNHPDP), 90-118 (RPGEPDCSYYVKFGSCKFGMNCRFNHPPR), and 157-185 (RPGTGLCSYYMNRGICKFGTNCKFDHPDP). In terms of domain architecture, MIF4G spans 384–637 (LKTLKSILNT…GAISYLIEKE (254 aa)).

This is Zinc finger CCCH domain-containing protein 43 from Oryza sativa subsp. japonica (Rice).